A 146-amino-acid polypeptide reads, in one-letter code: UPF0178 protein BCG9842_B2187 (146 aa).

Belongs to the UPF0178 family.

This is UPF0178 protein BCG9842_B2187 from Bacillus cereus (strain G9842).